We begin with the raw amino-acid sequence, 895 residues long: Androgen receptor (895 aa).

The interval 1-533 (MEVQLGLGRV…PIDYYFPPQK (533 aa)) is modulating. Positions 1–562 (MEVQLGLGRV…GSCKVFFKRA (562 aa)) are interaction with ZNF318. 2 disordered regions span residues 33 to 155 (VIQN…PTFP) and 175 to 211 (QLLQQQQQEAVSEGSSSGRAREASGAPTSSKDNYLGG). 2 stretches are compositionally biased toward low complexity: residues 44–81 (AASAAPPGASLQQQQQQQQQETSPRQQQQQQGEDGSPQ) and 175–200 (QLLQQQQQEAVSEGSSSGRAREASGA). Ser66 is modified (phosphoserine; by CDK9). Ser79 is modified (phosphoserine). A compositionally biased stretch (polar residues) spans 201-211 (PTSSKDNYLGG). Phosphotyrosine; by CSK is present on Tyr208. Residue Ser241 is modified to Phosphoserine. At Tyr252 the chain carries Phosphotyrosine; by CSK and TNK2. Phosphotyrosine; by CSK is present on residues Tyr292, Tyr331, Tyr342, and Tyr347. Tyr348 carries the post-translational modification Phosphotyrosine; by CSK and TNK2. Residue Lys371 forms a Glycyl lysine isopeptide (Lys-Gly) (interchain with G-Cter in SUMO) linkage. Tyr378 is modified (phosphotyrosine; by CSK). Residue Lys496 forms a Glycyl lysine isopeptide (Lys-Gly) (interchain with G-Cter in SUMO) linkage. Phosphotyrosine; by CSK is present on residues Tyr510 and Tyr527. The interaction with LPXN stretch occupies residues 527 to 894 (YYFPPQKTCL…GKVKPIYFHT (368 aa)). Residues 534-607 (TCLICGDEAS…AGMTLGARKL (74 aa)) constitute a DNA-binding region (nuclear receptor). 2 NR C4-type zinc fingers span residues 535–555 (CLICGDEASGCHYGALTCGSC) and 571–595 (CASRNDCTIDKFRRKNCPSCRLRKC). Positions 547 to 637 (YGALTCGSCK…TEETAQKLTV (91 aa)) are interaction with HIPK3. The interaction with CCAR1 stretch occupies residues 567–894 (QKYLCASRND…GKVKPIYFHT (328 aa)). The tract at residues 600-894 (MTLGARKLKK…GKVKPIYFHT (295 aa)) is interaction with KAT7. Residue Ser626 is modified to Phosphoserine; by STK4/MST1. The NR LBD domain maps to 644–875 (ECQPIFLNVL…DFPEMMAEII (232 aa)). The 17beta-hydroxy-5alpha-androstan-3-one site is built by Asn681 and Arg728. Residues Lys821 and Lys823 each participate in a glycyl lysine isopeptide (Lys-Gly) (interchain with G-Cter in ubiquitin) cross-link. Thr853 provides a ligand contact to 17beta-hydroxy-5alpha-androstan-3-one. Tyr891 carries the post-translational modification Phosphotyrosine; by CSK.

This sequence belongs to the nuclear hormone receptor family. NR3 subfamily. Binds DNA as a homodimer. Part of a ternary complex containing AR, EFCAB6/DJBP and PARK7. Interacts with HIPK3 and NR0B2 in the presence of androgen. The ligand binding domain interacts with KAT7/HBO1 in the presence of dihydrotestosterone. Interacts with EFCAB6/DJBP, PQBP1, RANBP9, RBAK, SPDEF, SRA1, TGFB1I1 and RREB1. Interacts with ZMIZ1/ZIMP10 and ZMIZ2/ZMIP7 which both enhance its transactivation activity. Interacts with SLC30A9 and RAD54L2/ARIP4. Interacts with MACROD1 (via macro domain). Interacts via the ligand-binding domain with LXXLL and FXXLF motifs from NCOA1, NCOA2, NCOA3 and MAGEA11. Interacts (via nuclear receptor DNA binding domain and nuclear receptor ligand binding domain) with NCOA4. The AR N-terminal poly-Gln region binds Ran resulting in enhancement of AR-mediated transactivation. Ran-binding decreases as the poly-Gln length increases. Interacts with HIP1 (via coiled coil domain). Interacts (via ligand-binding domain) with TRIM68. Interacts with TNK2. Interacts with USP26. Interacts with RNF6. Interacts (regulated by RNF6 probably through polyubiquitination) with RNF14; regulates AR transcriptional activity. Interacts with PRMT2 and TRIM24. Interacts with RACK1. Interacts with RANBP10; this interaction enhances dihydrotestosterone-induced AR transcriptional activity. Interacts with PRPF6 in a hormone-independent way; this interaction enhances dihydrotestosterone-induced AR transcriptional activity. Interacts with STK4/MST1. Interacts with ZIPK/DAPK3. Interacts with LPXN. Interacts with MAK. Part of a complex containing AR, MAK and NCOA3. Interacts with CRY1. Interacts with CCAR1 and GATA2. Interacts with ZNF318. Interacts with BUD31. Interacts with ARID4A. Interacts with ARID4B. Interacts (via NR LBD domain) with ZBTB7A; the interaction is direct and androgen-dependent. Interacts with NCOR1. Interacts with NCOR2. Interacts with CRY2 in a ligand-dependent manner. In terms of processing, phosphorylated in prostate cancer cells in response to several growth factors including EGF. Phosphorylation is induced by c-Src kinase (CSK). Tyr-510 is one of the major phosphorylation sites and an increase in phosphorylation and Src kinase activity is associated with prostate cancer progression. Phosphorylation by TNK2 enhances the DNA-binding and transcriptional activity. Phosphorylation at Ser-66 by CDK9 regulates AR promoter selectivity and cell growth. Sumoylated on Lys-371 (major) and Lys-496. Ubiquitinated. Deubiquitinated by USP26. 'Lys-6' and 'Lys-27'-linked polyubiquitination by RNF6 modulates AR transcriptional activity and specificity. Post-translationally, palmitoylated by ZDHHC7 and ZDHHC21. Palmitoylation is required for plasma membrane targeting and for rapid intracellular signaling via ERK and AKT kinases and cAMP generation.

Its subcellular location is the nucleus. It is found in the cytoplasm. Steroid hormone receptors are ligand-activated transcription factors that regulate eukaryotic gene expression and affect cellular proliferation and differentiation in target tissues. Transcription factor activity is modulated by bound coactivator and corepressor proteins like ZBTB7A that recruits NCOR1 and NCOR2 to the androgen response elements/ARE on target genes, negatively regulating androgen receptor signaling and androgen-induced cell proliferation. Transcription activation is also down-regulated by NR0B2. Activated, but not phosphorylated, by HIPK3 and ZIPK/DAPK3. This Papio hamadryas (Hamadryas baboon) protein is Androgen receptor (AR).